The primary structure comprises 402 residues: Nicotinate phosphoribosyltransferase (402 aa).

His-221 is modified (phosphohistidine; by autocatalysis).

This sequence belongs to the NAPRTase family. Transiently phosphorylated on a His residue during the reaction cycle. Phosphorylation strongly increases the affinity for substrates and increases the rate of nicotinate D-ribonucleotide production. Dephosphorylation regenerates the low-affinity form of the enzyme, leading to product release.

The catalysed reaction is nicotinate + 5-phospho-alpha-D-ribose 1-diphosphate + ATP + H2O = nicotinate beta-D-ribonucleotide + ADP + phosphate + diphosphate. Its pathway is cofactor biosynthesis; NAD(+) biosynthesis; nicotinate D-ribonucleotide from nicotinate: step 1/1. Functionally, catalyzes the synthesis of beta-nicotinate D-ribonucleotide from nicotinate and 5-phospho-D-ribose 1-phosphate at the expense of ATP. The sequence is that of Nicotinate phosphoribosyltransferase from Sodalis glossinidius (strain morsitans).